The primary structure comprises 480 residues: G-rich sequence factor 1 (480 aa).

Residues 1–117 (MAGTRWVLGA…AAAAVPTRSY (117 aa)) constitute a mitochondrion transit peptide. 2 RRM domains span residues 122–246 (KTTY…SSPV) and 250–326 (GVVR…PSRR). The residue at position 244 (serine 244) is a Phosphoserine. Serine 335 is modified (phosphoserine). In terms of domain architecture, RRM 3 spans 401-480 (HFVHMRGLPF…LFLNSCPKGK (80 aa)).

In terms of assembly, monomer. Found in a complex with DDX28, DHX30, FASTKD2 and FASTKD5. Interacts with the mitochondrial RNase P complex subunit TRMT10C/MRPP1. Interacts with the 2 components of the mitochondrial degradosome complex, PNPT1 and SUPV3L1, in an RNA-dependent manner.

It is found in the mitochondrion matrix. The protein localises to the cytoplasm. Regulator of post-transcriptional mitochondrial gene expression, required for assembly of the mitochondrial ribosome and for recruitment of mRNA and lncRNA. Binds RNAs containing the 14 base G-rich element. Preferentially binds RNAs transcribed from three contiguous genes on the light strand of mtDNA, the ND6 mRNA, and the long non-coding RNAs for MT-CYB and MT-ND5, each of which contains multiple consensus binding sequences. Involved in the degradosome-mediated decay of non-coding mitochondrial transcripts (MT-ncRNA) and tRNA-like molecules. Acts by unwinding G-quadruplex RNA structures in MT-ncRNA, thus facilitating their degradation by the degradosome. G-quadruplexes (G4) are non-canonical 4 stranded structures formed by transcripts from the light strand of mtDNA. The protein is G-rich sequence factor 1 (GRSF1) of Homo sapiens (Human).